The following is a 30-amino-acid chain: MSISFPKMQHLIVMTTIGDKKVNNNIILFL.

This is an uncharacterized protein from Saccharomyces cerevisiae (strain ATCC 204508 / S288c) (Baker's yeast).